A 1128-amino-acid polypeptide reads, in one-letter code: GTPase-activating protein BEM3 (1128 aa).

Residues 194 to 241 (SSPTKIHSEQLASPAASVTYTTSRITIKSPNKGSKSPLQERLRSPQNP) form a disordered region. The span at 209–230 (ASVTYTTSRITIKSPNKGSKSP) shows a compositional bias: polar residues. The residue at position 254 (S254) is a Phosphoserine. Disordered stretches follow at residues 345–391 (EDLV…TPLS) and 418–486 (PVLT…RPHA). Residues 366–375 (LPPPPAPPTF) are compositionally biased toward pro residues. 2 stretches are compositionally biased toward polar residues: residues 382 to 391 (GNIKNSTPLS) and 420 to 478 (LTSS…QGSL). Positions 634–741 (DNVKDGSLLL…WLSAFSDYID (108 aa)) constitute a PH domain. 2 disordered regions span residues 746–777 (LSLS…NATI) and 796–838 (NNNI…DSRR). Positions 752–764 (RNANDTDSASHLS) are enriched in polar residues. Positions 796–815 (NNNISNSSNNIANSDGIDSN) are enriched in low complexity. Positions 816-829 (PSSHSNFLASSSGN) are enriched in polar residues. The 216-residue stretch at 913–1128 (LRLSSHKYQN…EKVDIHIPQV (216 aa)) folds into the Rho-GAP domain.

The protein localises to the cytoplasm. Functionally, GTPase-activating protein (GAP) for CDC42 and less efficiently for RHO1. Negative regulator of the pheromone-response pathway through the STE20 protein kinase. The sequence is that of GTPase-activating protein BEM3 (BEM3) from Saccharomyces cerevisiae (strain ATCC 204508 / S288c) (Baker's yeast).